The chain runs to 317 residues: Aspartate carbamoyltransferase catalytic subunit (317 aa).

2 residues coordinate carbamoyl phosphate: R66 and T67. K94 contacts L-aspartate. Residues R116, H144, and Q147 each coordinate carbamoyl phosphate. L-aspartate is bound by residues R177 and R231. Carbamoyl phosphate-binding residues include G272 and P273.

This sequence belongs to the aspartate/ornithine carbamoyltransferase superfamily. ATCase family. In terms of assembly, heterododecamer (2C3:3R2) of six catalytic PyrB chains organized as two trimers (C3), and six regulatory PyrI chains organized as three dimers (R2).

The catalysed reaction is carbamoyl phosphate + L-aspartate = N-carbamoyl-L-aspartate + phosphate + H(+). It functions in the pathway pyrimidine metabolism; UMP biosynthesis via de novo pathway; (S)-dihydroorotate from bicarbonate: step 2/3. In terms of biological role, catalyzes the condensation of carbamoyl phosphate and aspartate to form carbamoyl aspartate and inorganic phosphate, the committed step in the de novo pyrimidine nucleotide biosynthesis pathway. In Rhodopseudomonas palustris (strain BisB18), this protein is Aspartate carbamoyltransferase catalytic subunit.